Consider the following 454-residue polypeptide: tRNA modification GTPase MnmE (454 aa).

Residues arginine 23, glutamate 80, and lysine 120 each contribute to the (6S)-5-formyl-5,6,7,8-tetrahydrofolate site. The 162-residue stretch at 216 to 377 folds into the TrmE-type G domain; it reads GMKVVIAGRP…LRNHLKQSMG (162 aa). Residue asparagine 226 coordinates K(+). Residues 226 to 231, 245 to 251, 270 to 273, 335 to 338, and 358 to 360 each bind GTP; these read NAGKSS, TDIAGTT, DTAG, NKAD, and SAR. Serine 230 lines the Mg(2+) pocket. Residues threonine 245, isoleucine 247, and threonine 250 each contribute to the K(+) site. Threonine 251 contributes to the Mg(2+) binding site. Lysine 454 serves as a coordination point for (6S)-5-formyl-5,6,7,8-tetrahydrofolate.

It belongs to the TRAFAC class TrmE-Era-EngA-EngB-Septin-like GTPase superfamily. TrmE GTPase family. Homodimer. Heterotetramer of two MnmE and two MnmG subunits. Requires K(+) as cofactor.

It is found in the cytoplasm. Its function is as follows. Exhibits a very high intrinsic GTPase hydrolysis rate. Involved in the addition of a carboxymethylaminomethyl (cmnm) group at the wobble position (U34) of certain tRNAs, forming tRNA-cmnm(5)s(2)U34. This chain is tRNA modification GTPase MnmE, found in Yersinia enterocolitica serotype O:8 / biotype 1B (strain NCTC 13174 / 8081).